Consider the following 141-residue polypeptide: Large ribosomal subunit protein uL13 (141 aa).

This sequence belongs to the universal ribosomal protein uL13 family. As to quaternary structure, part of the 50S ribosomal subunit.

Its function is as follows. This protein is one of the early assembly proteins of the 50S ribosomal subunit, although it is not seen to bind rRNA by itself. It is important during the early stages of 50S assembly. This is Large ribosomal subunit protein uL13 from Sulfurovum sp. (strain NBC37-1).